The primary structure comprises 416 residues: CinA-like protein (416 aa).

Belongs to the CinA family.

This chain is CinA-like protein, found in Syntrophomonas wolfei subsp. wolfei (strain DSM 2245B / Goettingen).